The primary structure comprises 772 residues: 5-methyltetrahydropteroyltriglutamate--homocysteine methyltransferase (772 aa).

5-methyltetrahydropteroyltri-L-glutamate is bound by residues 24–27 (RELK) and Lys120. L-homocysteine is bound by residues 446-448 (IGS) and Glu499. L-methionine contacts are provided by residues 446–448 (IGS) and Glu499. Trp576 is a 5-methyltetrahydropteroyltri-L-glutamate binding site. Residue Asp614 participates in L-homocysteine binding. Asp614 is a binding site for L-methionine. Residue Glu620 coordinates 5-methyltetrahydropteroyltri-L-glutamate. 3 residues coordinate Zn(2+): His656, Cys658, and Glu680. Residue His709 is the Proton donor of the active site. Cys741 lines the Zn(2+) pocket.

The protein belongs to the vitamin-B12 independent methionine synthase family. It depends on Zn(2+) as a cofactor.

The catalysed reaction is 5-methyltetrahydropteroyltri-L-glutamate + L-homocysteine = tetrahydropteroyltri-L-glutamate + L-methionine. It participates in amino-acid biosynthesis; L-methionine biosynthesis via de novo pathway; L-methionine from L-homocysteine (MetE route): step 1/1. Its function is as follows. Catalyzes the transfer of a methyl group from 5-methyltetrahydrofolate to homocysteine resulting in methionine formation. This chain is 5-methyltetrahydropteroyltriglutamate--homocysteine methyltransferase, found in Streptomyces coelicolor (strain ATCC BAA-471 / A3(2) / M145).